A 1012-amino-acid polypeptide reads, in one-letter code: Isoleucine--tRNA ligase, mitochondrial (1012 aa).

The transit peptide at 1-48 (MHWGLCPRGPGAAAVAAAGSFWGPARLPSRLGCLGMTRRLVVRSVAGA) directs the protein to the mitochondrion. Lys-56 is modified (N6-succinyllysine). At Lys-74 the chain carries N6-acetyllysine; alternate. Lys-74 is subject to N6-succinyllysine; alternate. The 'HIGH' region signature appears at 116-126 (PYANGDPHVGH). The residue at position 194 (Lys-194) is an N6-succinyllysine. Lys-233 is subject to N6-acetyllysine. Lys-241 carries the post-translational modification N6-acetyllysine; alternate. Lys-241 bears the N6-succinyllysine; alternate mark. N6-succinyllysine occurs at positions 479 and 500. The ATP site is built by Lys-664 and Lys-667. The 'KMSKS' region signature appears at 664 to 668 (KMSKS). Position 725 is an N6-acetyllysine (Lys-725). 2 positions are modified to N6-acetyllysine; alternate: Lys-775 and Lys-781. N6-succinyllysine; alternate is present on residues Lys-775 and Lys-781.

The protein belongs to the class-I aminoacyl-tRNA synthetase family.

Its subcellular location is the mitochondrion matrix. The enzyme catalyses tRNA(Ile) + L-isoleucine + ATP = L-isoleucyl-tRNA(Ile) + AMP + diphosphate. Its function is as follows. Aminoacyl-tRNA synthetase that catalyzes the specific attachment of isoleucine to its cognate tRNA (tRNA(Ile)). This Mus musculus (Mouse) protein is Isoleucine--tRNA ligase, mitochondrial.